A 254-amino-acid polypeptide reads, in one-letter code: tRNA pseudouridine synthase A (254 aa).

The active-site Nucleophile is D52. Residue Y110 participates in substrate binding.

It belongs to the tRNA pseudouridine synthase TruA family. As to quaternary structure, homodimer.

The enzyme catalyses uridine(38/39/40) in tRNA = pseudouridine(38/39/40) in tRNA. In terms of biological role, formation of pseudouridine at positions 38, 39 and 40 in the anticodon stem and loop of transfer RNAs. The sequence is that of tRNA pseudouridine synthase A from Thermodesulfovibrio yellowstonii (strain ATCC 51303 / DSM 11347 / YP87).